A 144-amino-acid chain; its full sequence is Small ribosomal subunit protein bS6 (144 aa).

The tract at residues 97–144 (DTEQSLIMKSKDEKGDKPERSERRRRDDEEVDAAPAATDTDGDNAEAA) is disordered. Residues 105-124 (KSKDEKGDKPERSERRRRDD) show a composition bias toward basic and acidic residues.

Belongs to the bacterial ribosomal protein bS6 family.

Its function is as follows. Binds together with bS18 to 16S ribosomal RNA. The chain is Small ribosomal subunit protein bS6 from Xanthomonas campestris pv. campestris (strain B100).